Reading from the N-terminus, the 430-residue chain is Tyrosine--tRNA ligase (430 aa).

Tyrosine 36 contributes to the L-tyrosine binding site. The 'HIGH' region motif lies at 41-50 (PTASSLHVGS). Residues tyrosine 170 and glutamine 174 each contribute to the L-tyrosine site. Residues 230–234 (KMGKT) carry the 'KMSKS' region motif. An ATP-binding site is contributed by lysine 233. The region spanning 362-427 (VPAFELFDEI…GKKNYHRLVL (66 aa)) is the S4 RNA-binding domain.

It belongs to the class-I aminoacyl-tRNA synthetase family. TyrS type 1 subfamily. Homodimer.

It localises to the cytoplasm. It catalyses the reaction tRNA(Tyr) + L-tyrosine + ATP = L-tyrosyl-tRNA(Tyr) + AMP + diphosphate + H(+). Catalyzes the attachment of tyrosine to tRNA(Tyr) in a two-step reaction: tyrosine is first activated by ATP to form Tyr-AMP and then transferred to the acceptor end of tRNA(Tyr). The polypeptide is Tyrosine--tRNA ligase (Desulfatibacillum aliphaticivorans).